We begin with the raw amino-acid sequence, 131 residues long: Large ribosomal subunit protein eL32 (131 aa).

Residues 39 to 77 form a disordered region; that stretch reads LGEKWRRPKGRHSKMRRKLKSKPKMPNPGYGSPKKVRGL. A compositionally biased stretch (basic residues) spans 44–61; that stretch reads RRPKGRHSKMRRKLKSKP.

The protein belongs to the eukaryotic ribosomal protein eL32 family.

This chain is Large ribosomal subunit protein eL32 (rpl32), found in Methanopyrus kandleri (strain AV19 / DSM 6324 / JCM 9639 / NBRC 100938).